Here is a 360-residue protein sequence, read N- to C-terminus: Alanine racemase (360 aa).

Residue Lys36 is the Proton acceptor; specific for D-alanine of the active site. Lys36 carries the post-translational modification N6-(pyridoxal phosphate)lysine. Arg132 contributes to the substrate binding site. Residue Tyr256 is the Proton acceptor; specific for L-alanine of the active site. Met304 is a binding site for substrate.

It belongs to the alanine racemase family. The cofactor is pyridoxal 5'-phosphate.

The enzyme catalyses L-alanine = D-alanine. It functions in the pathway amino-acid biosynthesis; D-alanine biosynthesis; D-alanine from L-alanine: step 1/1. Its function is as follows. Catalyzes the interconversion of L-alanine and D-alanine. May also act on other amino acids. The protein is Alanine racemase (alr) of Pasteurella multocida (strain Pm70).